A 317-amino-acid chain; its full sequence is Protoheme IX farnesyltransferase (317 aa).

Transmembrane regions (helical) follow at residues 44 to 64 (IGLI…ANTF), 93 to 113 (HASV…WVLC), 116 to 136 (VLAG…YTKY), 143 to 163 (LNIV…WAVI), 178 to 198 (AIVL…ALAM), 221 to 241 (VTRQ…LLIP), 243 to 263 (ASWI…VMAV), and 288 to 308 (LAVY…TIGG).

It belongs to the UbiA prenyltransferase family. Protoheme IX farnesyltransferase subfamily.

It localises to the cell membrane. The enzyme catalyses heme b + (2E,6E)-farnesyl diphosphate + H2O = Fe(II)-heme o + diphosphate. It participates in porphyrin-containing compound metabolism; heme O biosynthesis; heme O from protoheme: step 1/1. In terms of biological role, converts heme B (protoheme IX) to heme O by substitution of the vinyl group on carbon 2 of heme B porphyrin ring with a hydroxyethyl farnesyl side group. This is Protoheme IX farnesyltransferase from Corynebacterium diphtheriae (strain ATCC 700971 / NCTC 13129 / Biotype gravis).